The following is a 340-amino-acid chain: Outer membrane protein B (340 aa).

Positions 1-26 are cleaved as a signal peptide; it reads MSSKLVNYLRLTFLSFLGIASTSLDA.

Belongs to the chlamydial OMP family.

The protein resides in the cell outer membrane. The protein is Outer membrane protein B (ompB) of Chlamydia trachomatis serovar D (strain ATCC VR-885 / DSM 19411 / UW-3/Cx).